The sequence spans 650 residues: Leukocyte immunoglobulin-like receptor subfamily B member 1 (650 aa).

The N-terminal stretch at 1–23 is a signal peptide; sequence MTPILTVLICLGLSLGPRTHVQA. Over 24–461 the chain is Extracellular; that stretch reads GHLPKPTLWA…QSGLGRHLGV (438 aa). Ig-like C2-type domains follow at residues 27–115, 116–221, 222–312, and 313–409; these read PKPT…DPLE, LVVT…LVLG, VSKK…APSD, and PLDI…YLLT. Intrachain disulfides connect cysteine 49–cysteine 98, cysteine 145–cysteine 197, cysteine 157–cysteine 167, and cysteine 246–cysteine 297. Residues asparagine 281, asparagine 302, and asparagine 341 are each glycosylated (N-linked (GlcNAc...) asparagine). A disulfide bridge connects residues cysteine 346 and cysteine 397. Residues 415 to 451 form a disordered region; it reads LELVVSGPSGGPSSPTTGPTSTSGPEDQPLTPTGSDP. A compositionally biased stretch (low complexity) spans 425-439; the sequence is GPSSPTTGPTSTSGP. A helical transmembrane segment spans residues 462–482; sequence VIGILVAVILLLLLLLLLFLI. The Cytoplasmic portion of the chain corresponds to 483–650; the sequence is LRHRRQGKHW…PSIYATLAIH (168 aa). Residues 491–524 are disordered; sequence HWTSTQRKADFQHPAGAVGPEPTDRGLQWRSSPA. 2 short sequence motifs (ITIM motif) span residues 531 to 536 and 560 to 565; these read NLYAAV and VTYAEV. At tyrosine 533 the chain carries Phosphotyrosine. The interval 563-650 is disordered; it reads AEVKHSRPRR…PSIYATLAIH (88 aa). Basic and acidic residues-rich tracts occupy residues 564-574 and 586-600; these read EVKHSRPRREM and LDTK…RQMD. Short sequence motifs (ITIM motif) lie at residues 612–617 and 642–647; these read VTYAQL and SIYATL. Tyrosine 614 and tyrosine 644 each carry phosphotyrosine.

As to quaternary structure, binds PTPN6 when phosphorylated. Binds FCER1A and FCGR1A. Interacts with human cytomegalovirus/HHV-5 protein UL18. Interacts with peptide-bound HLA-G-B2M complex. Interacts with peptide-bound HLA-F-B2M complex but not with peptide-free HLA-F open conformer. It does not probe the peptide sequence directly. Phosphorylated on tyrosine residues. Dephosphorylated by PTPN6. Expressed in B cells, monocytes and various dendritic cell (DC) subsets including myeloid, plasmacytoid and tolerogenic DCs (at protein level). Expressed in decidual macrophages (at protein level). Expressed in decidual NK cells (at protein level).

Its subcellular location is the cell membrane. It is found in the secreted. Functionally, receptor for class I MHC antigens. Recognizes a broad spectrum of HLA-A, HLA-B, HLA-C, HLA-G and HLA-F alleles. Receptor for H301/UL18, a human cytomegalovirus class I MHC homolog. Ligand binding results in inhibitory signals and down-regulation of the immune response. Engagement of LILRB1 present on natural killer cells or T-cells by class I MHC molecules protects the target cells from lysis. Interaction with HLA-B or HLA-E leads to inhibition of FCER1A signaling and serotonin release. Inhibits FCGR1A-mediated phosphorylation of cellular proteins and mobilization of intracellular calcium ions. Recognizes HLA-G in complex with B2M/beta-2 microglobulin and a nonamer self-peptide. Upon interaction with peptide-bound HLA-G-B2M complex, triggers secretion of growth-promoting factors by decidual NK cells. Reprograms B cells toward an immune suppressive phenotype. The sequence is that of Leukocyte immunoglobulin-like receptor subfamily B member 1 from Homo sapiens (Human).